The primary structure comprises 441 residues: MAVLAKFISKNHPSVPIIIISNAPESAAASVAAIPSISYHRLPLPEIPPDMTTDRVELFFELPRLSNPNLLTALQQISQKTRIRAVILDFFCNAAFEVPTSLNIPTYYYFSAGTPTAILTLYFETIDETIPVDLQDLNDYVDIPGLPPIHCLDIPVALSPRKSLVYKSSVDISKNLRRSAGILVNGFDALEFRAIGSHSQRPMHFKGPTPPVYFIGPLVGDVDTKAGSEEHECLRWLDTQPSKSVVFLCFGRRGVFSAKQLKETAAALENSGHRFLWSVRNPPELKKATGSDEPDLDELLPEGFLERTKDRGFVIKSWAPQKEVLAHDSVGGFVTHCGRSSVSEGVWFGVPMIGWPVDAELRLNRAVMVDDLQVALPLEEEAGGFVTAAELEKRVRELMETKAGKAVRQRVTELKLSARAAVAENGSSLNDLKKFLHATRD.

The protein belongs to the UDP-glycosyltransferase family. Homodimer.

The enzyme catalyses baicalein + UDP-alpha-D-glucuronate = baicalin + UDP. Inhibited by copper, zinc and iron, p-Chloromercuri-benzoic acid (PCMBA) and 4,4'-diisothiocyanostilbene-2,2'-disulfonic acid (DIDS), but not by N-ethylmaleimide (NEM), dithioerythritol (DTE), calcium or magnesium. Its function is as follows. Involved in the production of glucuronosylated baicalein, a flavonoid that shows antiallergic, anti-HIV and antitumor activities. Can use baicalein, scutellarein and wogonin as substrates, but not chrysin, apigenin, luteolin, quercetin, formononetin and daidzein. Highly specific for UDP-glucuronate (UDP-GlcUA) and no activity with UDP-glucose or UDP-galacturonic acid. This Scutellaria baicalensis (Baical skullcap) protein is Baicalein 7-O-glucuronosyltransferase (UBGAT-I).